Consider the following 198-residue polypeptide: Recombination protein RecR (198 aa).

A C4-type zinc finger spans residues 57 to 72 (CTVCGHITDTDPCYIC). One can recognise a Toprim domain in the interval 80 to 175 (TTICVVQDPK…KVTRIAHGLP (96 aa)).

This sequence belongs to the RecR family.

Its function is as follows. May play a role in DNA repair. It seems to be involved in an RecBC-independent recombinational process of DNA repair. It may act with RecF and RecO. In Geobacillus sp. (strain WCH70), this protein is Recombination protein RecR.